An 877-amino-acid chain; its full sequence is AP-5 complex subunit beta-1 (877 aa).

Probably part of the adaptor protein complex 5 (AP-5), a tetramer composed of AP5B1, AP5M1, AP5S1 and AP5Z1. Interacts with ZFYVE26 and SPG11.

As part of AP-5, a probable fifth adaptor protein complex, it may be involved in endosomal transport. This chain is AP-5 complex subunit beta-1 (AP5B1), found in Bos taurus (Bovine).